The following is a 178-amino-acid chain: Crossover junction endodeoxyribonuclease RuvC (178 aa).

Catalysis depends on residues Asp7, Glu67, and Asp139. Mg(2+)-binding residues include Asp7, Glu67, and Asp139.

Belongs to the RuvC family. Homodimer which binds Holliday junction (HJ) DNA. The HJ becomes 2-fold symmetrical on binding to RuvC with unstacked arms; it has a different conformation from HJ DNA in complex with RuvA. In the full resolvosome a probable DNA-RuvA(4)-RuvB(12)-RuvC(2) complex forms which resolves the HJ. Mg(2+) is required as a cofactor.

The protein resides in the cytoplasm. It carries out the reaction Endonucleolytic cleavage at a junction such as a reciprocal single-stranded crossover between two homologous DNA duplexes (Holliday junction).. Functionally, the RuvA-RuvB-RuvC complex processes Holliday junction (HJ) DNA during genetic recombination and DNA repair. Endonuclease that resolves HJ intermediates. Cleaves cruciform DNA by making single-stranded nicks across the HJ at symmetrical positions within the homologous arms, yielding a 5'-phosphate and a 3'-hydroxyl group; requires a central core of homology in the junction. The consensus cleavage sequence is 5'-(A/T)TT(C/G)-3'. Cleavage occurs on the 3'-side of the TT dinucleotide at the point of strand exchange. HJ branch migration catalyzed by RuvA-RuvB allows RuvC to scan DNA until it finds its consensus sequence, where it cleaves and resolves the cruciform DNA. The protein is Crossover junction endodeoxyribonuclease RuvC of Trichlorobacter lovleyi (strain ATCC BAA-1151 / DSM 17278 / SZ) (Geobacter lovleyi).